The following is a 249-amino-acid chain: 2,3-bisphosphoglycerate-dependent phosphoglycerate mutase (249 aa).

Residues 9–16, 22–23, Arg61, 88–91, Lys99, 115–116, and 184–185 contribute to the substrate site; these read RHGQSQWN, TG, ERHY, RR, and GN. His10 (tele-phosphohistidine intermediate) is an active-site residue. Glu88 serves as the catalytic Proton donor/acceptor.

Belongs to the phosphoglycerate mutase family. BPG-dependent PGAM subfamily. Homodimer.

The catalysed reaction is (2R)-2-phosphoglycerate = (2R)-3-phosphoglycerate. It functions in the pathway carbohydrate degradation; glycolysis; pyruvate from D-glyceraldehyde 3-phosphate: step 3/5. In terms of biological role, catalyzes the interconversion of 2-phosphoglycerate and 3-phosphoglycerate. In Xanthomonas campestris pv. campestris (strain B100), this protein is 2,3-bisphosphoglycerate-dependent phosphoglycerate mutase.